The following is a 234-amino-acid chain: Orotidine 5'-phosphate decarboxylase (234 aa).

Substrate is bound by residues Asp10, Lys32, 59–68, Thr119, Arg180, Gln189, Gly209, and Arg210; that span reads DLKFHDIPNT. The active-site Proton donor is the Lys61.

It belongs to the OMP decarboxylase family. Type 1 subfamily. As to quaternary structure, homodimer.

It catalyses the reaction orotidine 5'-phosphate + H(+) = UMP + CO2. It participates in pyrimidine metabolism; UMP biosynthesis via de novo pathway; UMP from orotate: step 2/2. In terms of biological role, catalyzes the decarboxylation of orotidine 5'-monophosphate (OMP) to uridine 5'-monophosphate (UMP). The polypeptide is Orotidine 5'-phosphate decarboxylase (Mannheimia succiniciproducens (strain KCTC 0769BP / MBEL55E)).